The chain runs to 442 residues: Histidine--tRNA ligase (442 aa).

Belongs to the class-II aminoacyl-tRNA synthetase family. As to quaternary structure, homodimer.

It is found in the cytoplasm. It carries out the reaction tRNA(His) + L-histidine + ATP = L-histidyl-tRNA(His) + AMP + diphosphate + H(+). This chain is Histidine--tRNA ligase, found in Helicobacter pylori (strain P12).